Reading from the N-terminus, the 289-residue chain is N-methyltransferase FrzE (289 aa).

The protein belongs to the methyltransferase superfamily.

It carries out the reaction (1S,4S)-4-[(4-hydroxyphenyl)methyl]-2,5-diazaspiro[bicyclo[3.2.1]octane-6,1'-cyclohexan]-4'-one + S-adenosyl-L-methionine = (1S,4S)-4-[(4-hydroxyphenyl)methyl]-2-methyl-2,5-diazaspiro[bicyclo[3.2.1]octane-6,1'-cyclohexan]-4'-one + S-adenosyl-L-homocysteine + H(+). It catalyses the reaction (1S,4S)-4-[(4-methoxyphenyl)methyl]-2,5-diazaspiro[bicyclo[3.2.1]octane-6,1'-cyclohexan]-4'-one + S-adenosyl-L-methionine = (1S,4S)-4-[(4-methoxyphenyl)methyl]-2-methyl-2,5-diazaspiro[bicyclo[3.2.1]octane-6,1'-cyclohexan]-4'-one + S-adenosyl-L-homocysteine + H(+). It functions in the pathway secondary metabolite biosynthesis. N-methyltransferase; part of the gene cluster that mediates the biosynthesis of the alkaloid (-)-FR901483, a potent immunosuppressant that shows efficacy in animal models and a probable inhibitor of purine nucleotide biosynthesis by targeting phosphoribosylpyrophosphate amidotransferase (PPAT). Within the pathway, FrzE methylates the amine at position C10'. The biosynthesis of (-)-FR901483 starts with the condensation of two L-tyrosines to yield (S,S)-dityrosyl-piperazine. This process occurs in 3 steps with the non-canonical nonribosomal peptide synthetase FrzA catalyzing the reduction of L-tyrosine into L-tyrosinal, the spontaneous condensation of 2 L-tyrosinal units, and the subsequent reduction by the NmrA-like family domain-containing oxidoreductase FrzB. The cytochrome P450 monooxygenase FrzC then performs coupling between N10 and C1' to morph the piperazine into a 1,4-diazabicyclo[3.2.1]octane spiro-fused to a 2,5-cyclohexadienone. The dienone portion is further reduced to cyclohexanone by the flavin-dependent reductase FrzD. The methyltranserases (MTs) FrzE and FrzF are then involved in the methylation at the C10' amine and the C4 phenolic oxygen, respectively. The order of the two MTs appear to be interchangeable. Cleavage of the C9-N10' bond by the dioxygenase FrzG then leads to formation of a conjugated iminium. In addition to the oxidation of C9, an additional dehydrogenation between C7 and C8 can occur to give a likely shunt product. The next biosynthetic step is the intramolecular aldol condensation catalyzed by the newly identified aldolase FrzH to yield an aza-tricyclic product with the formation of a C9-C3' bond. The short-chain dehydrogenase/reductase FrzI then produces dephospho-(-)-FR901483 that is phosphorylated at C4'-OH into (-)-FR901483 by the phosphotransferase FrzJ. This chain is N-methyltransferase FrzE, found in Cladobotryum sp.